A 342-amino-acid chain; its full sequence is Phosphoribosylformylglycinamidine cyclo-ligase (342 aa).

The protein belongs to the AIR synthase family.

The protein localises to the cytoplasm. The enzyme catalyses 2-formamido-N(1)-(5-O-phospho-beta-D-ribosyl)acetamidine + ATP = 5-amino-1-(5-phospho-beta-D-ribosyl)imidazole + ADP + phosphate + H(+). It participates in purine metabolism; IMP biosynthesis via de novo pathway; 5-amino-1-(5-phospho-D-ribosyl)imidazole from N(2)-formyl-N(1)-(5-phospho-D-ribosyl)glycinamide: step 2/2. This is Phosphoribosylformylglycinamidine cyclo-ligase from Staphylococcus aureus (strain USA300).